We begin with the raw amino-acid sequence, 520 residues long: Flavin-dependent halogenase radH (520 aa).

Residues glycine 14, alanine 17, and glutamate 47 each coordinate FAD. Chloride-binding residues include serine 330 and glycine 331.

This sequence belongs to the flavin-dependent halogenase family.

It participates in secondary metabolite biosynthesis. Non-heme halogenase; part of the gene cluster that mediates the biosynthesis of radicicol, a resorcylic acid lactone (RAL) that irreversibly inhibits the HSP90 molecular chaperone, an important target for cancer chemotherapy. The cluster encodes only two apparent post-PKS enzymes, a cytochrome P450 monooxygenase (radP) and a non-heme halogenase (radH) that introduce the epoxide and the chlorine, respectively. If this cluster includes all the genes required for radicicol biosynthesis, the remaining structural features of radicicol are presumably generated by the PKSs rads1 and rads2. The C-2' ketone could arise if the R-PKS rads1 and NR-PKS rads2 each carry out four iterations, in contrast to the five iteration-three iteration split for the hypothemycin PKSs. The origin of the cis 5',6' double bond is not known. The radicicol R-PKS rads1 ER domain may catalyze either double bond isomerization or reduction in the third iteration. The protein is Flavin-dependent halogenase radH of Floropilus chiversii (Chaetomium chiversii).